The primary structure comprises 298 residues: tRNA U34 carboxymethyltransferase (298 aa).

Carboxy-S-adenosyl-L-methionine is bound by residues Lys-69, Trp-83, Lys-88, Gly-107, Asp-129–Ser-131, Val-156–Glu-157, Tyr-176, and Arg-291.

Belongs to the class I-like SAM-binding methyltransferase superfamily. CmoB family. In terms of assembly, homotetramer.

The enzyme catalyses carboxy-S-adenosyl-L-methionine + 5-hydroxyuridine(34) in tRNA = 5-carboxymethoxyuridine(34) in tRNA + S-adenosyl-L-homocysteine + H(+). In terms of biological role, catalyzes carboxymethyl transfer from carboxy-S-adenosyl-L-methionine (Cx-SAM) to 5-hydroxyuridine (ho5U) to form 5-carboxymethoxyuridine (cmo5U) at position 34 in tRNAs. This is tRNA U34 carboxymethyltransferase from Campylobacter curvus (strain 525.92).